The chain runs to 353 residues: MLYSLLYGYFNINLFQYLTFRAGLGFFIAFFLTLFLMPKFILWAKAKKANQPISSFVPSHQNKKDTPTMGGIVFVFATIVASVLCASLGNLYVLLGIIVLVGFSFVGFRDDYTKINQQNNAGMSAKMKFGMLFVLSLVVSVLLSLKGLDTFLYAPFLKNPLFEMPTMLAVGFWVLVFLSTSNAVNLTDGLDGLASVPSIFTLLSLSIFVYVAGNAEFSKYLLYPKVIDVGELFVVSLALVGSLFGFLWYNCNPASVFMGDSGSLALGGFIAYNAIVSHNEILLVLMGSIFVVETLSVILQVGSYKTRKKRLFLMAPIHHHFEQKGWAENKVIVRFWIISMLSNLVALLSLKVR.

The next 10 membrane-spanning stretches (helical) occupy residues 24–44, 66–86, 88–108, 129–149, 160–180, 192–212, 229–249, 256–276, 281–301, and 330–350; these read LGFF…ILWA, TPTM…VLCA, LGNL…FVGF, FGML…KGLD, PLFE…FLST, GLAS…VYVA, VGEL…FLWY, VFMG…NAIV, ILLV…ILQV, and KVIV…LLSL.

Belongs to the glycosyltransferase 4 family. MraY subfamily. It depends on Mg(2+) as a cofactor.

The protein resides in the cell inner membrane. The catalysed reaction is UDP-N-acetyl-alpha-D-muramoyl-L-alanyl-gamma-D-glutamyl-meso-2,6-diaminopimeloyl-D-alanyl-D-alanine + di-trans,octa-cis-undecaprenyl phosphate = di-trans,octa-cis-undecaprenyl diphospho-N-acetyl-alpha-D-muramoyl-L-alanyl-D-glutamyl-meso-2,6-diaminopimeloyl-D-alanyl-D-alanine + UMP. Its pathway is cell wall biogenesis; peptidoglycan biosynthesis. Its function is as follows. Catalyzes the initial step of the lipid cycle reactions in the biosynthesis of the cell wall peptidoglycan: transfers peptidoglycan precursor phospho-MurNAc-pentapeptide from UDP-MurNAc-pentapeptide onto the lipid carrier undecaprenyl phosphate, yielding undecaprenyl-pyrophosphoryl-MurNAc-pentapeptide, known as lipid I. This chain is Phospho-N-acetylmuramoyl-pentapeptide-transferase, found in Helicobacter pylori (strain HPAG1).